A 141-amino-acid polypeptide reads, in one-letter code: Large ribosomal subunit protein uL11 (141 aa).

It belongs to the universal ribosomal protein uL11 family. In terms of assembly, part of the ribosomal stalk of the 50S ribosomal subunit. Interacts with L10 and the large rRNA to form the base of the stalk. L10 forms an elongated spine to which L12 dimers bind in a sequential fashion forming a multimeric L10(L12)X complex. In terms of processing, one or more lysine residues are methylated.

Functionally, forms part of the ribosomal stalk which helps the ribosome interact with GTP-bound translation factors. In Pediococcus pentosaceus (strain ATCC 25745 / CCUG 21536 / LMG 10740 / 183-1w), this protein is Large ribosomal subunit protein uL11.